The primary structure comprises 80 residues: MTQHKSSMVYIPTTKEAKRRNGKSEGILNTIEEVVEKLYWTYYIHLPFYLMASFDSFFLHVFFLTIFSLSFFGILKYCFL.

A helical membrane pass occupies residues 54-74 (FDSFFLHVFFLTIFSLSFFGI).

As to quaternary structure, interacts with the serine palmitoyltransferase complex LCB1-LCB2. Component of the SPOTS complex, at least composed of LCB1/2 (LCB1 and/or LCB2), ORM1/2 (ORM1 and/or ORM2), SAC1 and TSC3.

It is found in the endoplasmic reticulum membrane. Stimulates the activity of serine palmitoyltransferase (SPT), and thus plays a role in the biosynthesis of sphingolipids. In Saccharomyces cerevisiae (strain ATCC 204508 / S288c) (Baker's yeast), this protein is Serine palmitoyltransferase-regulating protein TSC3 (TSC3).